The sequence spans 274 residues: NADPH-dependent 7-cyano-7-deazaguanine reductase (274 aa).

Residue 80-82 (VES) coordinates substrate. Residue 82–83 (SK) participates in NADPH binding. C181 acts as the Thioimide intermediate in catalysis. The active-site Proton donor is the D188. 220–221 (HE) serves as a coordination point for substrate. 249 to 250 (RG) serves as a coordination point for NADPH.

This sequence belongs to the GTP cyclohydrolase I family. QueF type 2 subfamily. Homodimer.

It localises to the cytoplasm. The catalysed reaction is 7-aminomethyl-7-carbaguanine + 2 NADP(+) = 7-cyano-7-deazaguanine + 2 NADPH + 3 H(+). Its pathway is tRNA modification; tRNA-queuosine biosynthesis. Functionally, catalyzes the NADPH-dependent reduction of 7-cyano-7-deazaguanine (preQ0) to 7-aminomethyl-7-deazaguanine (preQ1). This is NADPH-dependent 7-cyano-7-deazaguanine reductase from Paraburkholderia xenovorans (strain LB400).